The following is a 467-amino-acid chain: Asparagine--tRNA ligase (467 aa).

This sequence belongs to the class-II aminoacyl-tRNA synthetase family. Homodimer.

It is found in the cytoplasm. The enzyme catalyses tRNA(Asn) + L-asparagine + ATP = L-asparaginyl-tRNA(Asn) + AMP + diphosphate + H(+). This is Asparagine--tRNA ligase from Histophilus somni (strain 2336) (Haemophilus somnus).